The chain runs to 88 residues: UPF0297 protein GTNG_2488 (88 aa).

Belongs to the UPF0297 family.

This is UPF0297 protein GTNG_2488 from Geobacillus thermodenitrificans (strain NG80-2).